A 164-amino-acid polypeptide reads, in one-letter code: 6,7-dimethyl-8-ribityllumazine synthase (164 aa).

5-amino-6-(D-ribitylamino)uracil-binding positions include phenylalanine 24, serine 62–glutamate 64, and alanine 86–isoleucine 88. Position 91–92 (glutamine 91–threonine 92) interacts with (2S)-2-hydroxy-3-oxobutyl phosphate. Histidine 94 serves as the catalytic Proton donor. A 5-amino-6-(D-ribitylamino)uracil-binding site is contributed by phenylalanine 119. Residue arginine 133 coordinates (2S)-2-hydroxy-3-oxobutyl phosphate.

This sequence belongs to the DMRL synthase family.

The enzyme catalyses (2S)-2-hydroxy-3-oxobutyl phosphate + 5-amino-6-(D-ribitylamino)uracil = 6,7-dimethyl-8-(1-D-ribityl)lumazine + phosphate + 2 H2O + H(+). Its pathway is cofactor biosynthesis; riboflavin biosynthesis; riboflavin from 2-hydroxy-3-oxobutyl phosphate and 5-amino-6-(D-ribitylamino)uracil: step 1/2. Catalyzes the formation of 6,7-dimethyl-8-ribityllumazine by condensation of 5-amino-6-(D-ribitylamino)uracil with 3,4-dihydroxy-2-butanone 4-phosphate. This is the penultimate step in the biosynthesis of riboflavin. This Synechocystis sp. (strain ATCC 27184 / PCC 6803 / Kazusa) protein is 6,7-dimethyl-8-ribityllumazine synthase.